The chain runs to 449 residues: Hyaluronidase-4 (449 aa).

Residues 1 to 23 (MYHIWIKFLAAWIFLKRFNGVHV) form the signal peptide. Disulfide bonds link cysteine 47–cysteine 340 and cysteine 211–cysteine 227. N-linked (GlcNAc...) asparagine glycosylation is found at asparagine 67, asparagine 103, and asparagine 111. Glutamate 135 serves as the catalytic Proton donor. Asparagine 153 carries an N-linked (GlcNAc...) asparagine glycan. N-linked (GlcNAc...) asparagine glycosylation is present at asparagine 357. 3 disulfide bridges follow: cysteine 365–cysteine 376, cysteine 370–cysteine 427, and cysteine 429–cysteine 438. Asparagine 401 is a glycosylation site (N-linked (GlcNAc...) asparagine). An EGF-like domain is found at 427–438 (CQCYQGWKGLYC).

The protein belongs to the glycosyl hydrolase 56 family. As to quaternary structure, monomer. Expressed by the venom gland.

It localises to the secreted. The catalysed reaction is Random hydrolysis of (1-&gt;4)-linkages between N-acetyl-beta-D-glucosamine and D-glucuronate residues in hyaluronate.. In terms of biological role, snake venom endo-hyaluronidase that degrades hyaluronan to smaller oligosaccharide fragments. In venom, it is not toxic by itself, but increases the diffusion of other venom proteins by degrading the extracellular matrix. In addition, it displays antiedematogenic activity. This chain is Hyaluronidase-4, found in Cerastes cerastes (Horned desert viper).